Reading from the N-terminus, the 519-residue chain is Lysine 5,6-aminomutase alpha subunit (519 aa).

57–59 (DEV) is an adenosylcob(III)alamin binding site. Pyridoxal 5'-phosphate is bound by residues 187-192 (RTTGQS), S241, Y266, R271, and N302.

The protein belongs to the KamD family. As to quaternary structure, heterotetramer of 2 alpha and 2 beta subunits. Adenosylcob(III)alamin serves as cofactor. It depends on pyridoxal 5'-phosphate as a cofactor.

The catalysed reaction is (3S)-3,6-diaminohexanoate = (3S,5S)-3,5-diaminohexanoate. It carries out the reaction D-lysine = (2R,5S)-2,5-diaminohexanoate. It participates in amino-acid metabolism; lysine degradation. Rapidly inactivated in the presence of D-lysine and to a lesser extent in the absence of adenosylcobalamin (Adocbl). Activity is stable in the presence of Adocbl when D-lysine is absent. Adocbl imparts thermal stability at 37 degrees Celsius. Catalyzes the migration of the L-beta-lysine and D-lysine epsilon amino group to the delta carbon to produce 3,5-diaminohexanoate and 2,5-diaminohexanoate, respectively. This Acetoanaerobium sticklandii (strain ATCC 12662 / DSM 519 / JCM 1433 / CCUG 9281 / NCIMB 10654 / HF) (Clostridium sticklandii) protein is Lysine 5,6-aminomutase alpha subunit (kamD).